The chain runs to 148 residues: Cytochrome c-type biogenesis protein CcmE (148 aa).

The Cytoplasmic segment spans residues 1–7; sequence MKPRHKK. Residues 8–28 form a helical; Signal-anchor for type II membrane protein membrane-spanning segment; that stretch reads LAIIASSVTALGVASVLVLNA. At 29 to 148 the chain is on the periplasmic side; that stretch reads FQSNLVFFFS…ADKARKTVMQ (120 aa). The heme site is built by histidine 123 and tyrosine 127.

It belongs to the CcmE/CycJ family.

Its subcellular location is the cell inner membrane. Functionally, heme chaperone required for the biogenesis of c-type cytochromes. Transiently binds heme delivered by CcmC and transfers the heme to apo-cytochromes in a process facilitated by CcmF and CcmH. The chain is Cytochrome c-type biogenesis protein CcmE from Nitrosospira multiformis (strain ATCC 25196 / NCIMB 11849 / C 71).